Consider the following 80-residue polypeptide: RNA-binding protein Hfq (80 aa).

A Sm domain is found at 10-70 (DIFLNNARKE…ISTVSPAKPI (61 aa)).

It belongs to the Hfq family. In terms of assembly, homohexamer.

In terms of biological role, RNA chaperone that binds small regulatory RNA (sRNAs) and mRNAs to facilitate mRNA translational regulation in response to envelope stress, environmental stress and changes in metabolite concentrations. Also binds with high specificity to tRNAs. In Clostridium perfringens (strain SM101 / Type A), this protein is RNA-binding protein Hfq.